Here is a 457-residue protein sequence, read N- to C-terminus: UDP-N-acetylmuramate--L-alanine ligase (457 aa).

109–115 (GTDGKTT) is an ATP binding site.

It belongs to the MurCDEF family.

The protein resides in the cytoplasm. The enzyme catalyses UDP-N-acetyl-alpha-D-muramate + L-alanine + ATP = UDP-N-acetyl-alpha-D-muramoyl-L-alanine + ADP + phosphate + H(+). It participates in cell wall biogenesis; peptidoglycan biosynthesis. In terms of biological role, cell wall formation. This is UDP-N-acetylmuramate--L-alanine ligase from Thermotoga petrophila (strain ATCC BAA-488 / DSM 13995 / JCM 10881 / RKU-1).